We begin with the raw amino-acid sequence, 280 residues long: Phospholipase C D (280 aa).

Residues 258-280 (VPDPQIMPTQETTPTRGIPSGPC) are disordered.

It belongs to the bacterial phospholipase C family.

It localises to the secreted. It is found in the cell wall. It catalyses the reaction a 1,2-diacyl-sn-glycero-3-phosphocholine + H2O = phosphocholine + a 1,2-diacyl-sn-glycerol + H(+). It carries out the reaction 1,2-dihexadecanoyl-sn-glycero-3-phosphocholine + H2O = 1,2-dihexadecanoyl-sn-glycerol + phosphocholine + H(+). Involved in virulence. Induces cytotoxic effects on mouse macrophage cell lines, via direct or indirect enzymatic hydrolysis of cell membrane phospholipids. Hydrolyzes phosphatidylcholine. Does not have hemolytic activity. This is Phospholipase C D from Mycobacterium tuberculosis (strain ATCC 25618 / H37Rv).